Consider the following 2555-residue polypeptide: Neurogenic locus notch homolog protein 1 (2555 aa).

The first 18 residues, 1 to 18 (MPPLLAPLLCLALLPALA), serve as a signal peptide directing secretion. Over 19-1735 (ARGPRCSQPG…VEPPPPAQLH (1717 aa)) the chain is Extracellular. EGF-like domains follow at residues 20–58 (RGPRCSQPGETCLNGGKCEAANGTEACVCGGAFVGPRCQ), 59–99 (DPNP…PLCL), 102–139 (LDNACLTNPCRNGGTCDLLTLTEYKCRCPPGWSGKSCQ), and 140–176 (QADPCASNPCANGGQCLPFEASYICHCPPSFHGPTCR). 33 cysteine pairs are disulfide-bonded: C24/C37, C31/C46, C48/C57, C63/C74, C68/C87, C89/C98, C106/C117, C111/C127, C129/C138, C144/C155, C149/C164, C166/C175, C182/C195, C189/C204, C206/C215, C222/C233, C227/C243, C245/C254, C261/C272, C266/C281, C283/C292, C299/C312, C306/C321, C323/C332, C339/C350, C344/C359, C361/C370, C376/C387, C381/C398, C400/C409, C416/C429, C423/C438, and C440/C449. N-linked (GlcNAc...) asparagine glycosylation is present at N41. A glycan (O-linked (Glc...) serine) is linked at S65. O-linked (Fuc...) threonine glycosylation is present at T73. A glycan (O-linked (Fuc...) threonine) is linked at T116. A glycan (O-linked (Glc...) serine) is linked at S146. Residues 178-216 (DVNECGQKPGLCRHGGTCHNEVGSYRCVCRATHTGPNCE) enclose the EGF-like 5; calcium-binding domain. An O-linked (Fuc...) threonine glycan is attached at T194. The 38-residue stretch at 218 to 255 (PYVPCSPSPCQNGGTCRPTGDVTHECACLPGFTGQNCE) folds into the EGF-like 6 domain. O-linked (Fuc...) threonine; alternate glycosylation occurs at T232. A glycan (O-linked (GalNAc...) threonine; alternate) is linked at T232. An EGF-like 7; calcium-binding domain is found at 257–293 (NIDDCPGNNCKNGGACVDGVNTYNCRCPPEWTGQYCT). Residues 295-333 (DVDECQLMPNACQNGGTCHNTHGGYNCVCVNGWTGEDCS) enclose the EGF-like 8; calcium-binding domain. Residue T311 is glycosylated (O-linked (Fuc...) threonine). The region spanning 335-371 (NIDDCASAACFHGATCHDRVASFYCECPHGRTGLLCH) is the EGF-like 9; calcium-binding domain. O-linked (Glc...) serine glycosylation is present at S341. Residue T349 is glycosylated (O-linked (Fuc...) threonine). Residues 372-410 (LNDACISNPCNEGSNCDTNPVNGKAICTCPSGYTGPACS) form the EGF-like 10 domain. O-linked (Glc...) serine glycosylation occurs at S378. Positions 412 to 450 (DVDECSLGANPCEHAGKCINTLGSFECQCLQGYTGPRCE) constitute an EGF-like 11; calcium-binding domain. Positions 420–421 (AN) are interaction with DLL4. T432 and S435 together coordinate Ca(2+). S435 is a glycosylation site (O-linked (Glc...) serine). The tract at residues 448–452 (RCEID) is interaction with DLL4. Residues D452, V453, and E455 each contribute to the Ca(2+) site. The 37-residue stretch at 452–488 (DVNECVSNPCQNDATCLDQIGEFQCICMPGYEGVHCE) folds into the EGF-like 12; calcium-binding domain. 3 disulfide bridges follow: C456–C467, C461–C476, and C478–C487. S458 carries an O-linked (Glc...) serine glycan. A glycan (O-linked (Fuc...) threonine) is linked at T466. 2 residues coordinate Ca(2+): D469 and Q470. Positions 490, 491, and 493 each coordinate Ca(2+). Positions 490-526 (NTDECASSPCLHNGRCLDKINEFQCECPTGFTGHLCQ) constitute an EGF-like 13; calcium-binding domain. 74 cysteine pairs are disulfide-bonded: C494-C505, C499-C514, C516-C525, C532-C543, C537-C552, C554-C563, C570-C580, C575-C589, C591-C600, C607-C618, C612-C627, C629-C638, C645-C655, C650-C664, C666-C675, C682-C693, C687-C702, C704-C713, C720-C730, C725-C739, C741-C750, C757-C768, C762-C777, C779-C788, C795-C806, C800-C815, C817-C826, C833-C844, C838-C855, C857-C866, C873-C884, C878-C893, C895-C904, C911-C922, C916-C931, C933-C942, C949-C960, C954-C969, C971-C980, C987-C998, C992-C1007, C1009-C1018, C1025-C1036, C1030-C1045, C1047-C1056, C1063-C1074, C1068-C1083, C1085-C1094, C1101-C1122, C1116-C1131, C1133-C1142, C1149-C1160, C1154-C1169, C1171-C1180, C1187-C1198, C1192-C1207, C1209-C1218, C1238-C1253, C1255-C1264, C1271-C1284, C1276-C1293, C1295-C1304, C1311-C1322, C1316-C1334, C1336-C1345, C1352-C1363, C1357-C1372, C1374-C1383, C1391-C1403, C1397-C1414, C1416-C1425, C1449-C1472, C1454-C1467, and C1463-C1479. S496 carries an O-linked (Glc...) serine glycan. D507 and K508 together coordinate Ca(2+). One can recognise an EGF-like 14; calcium-binding domain in the interval 528 to 564 (DVDECASTPCKNGAKCLDGPNTYTCVCTEGYTGTHCE). O-linked (Glc...) serine glycosylation is present at S534. The region spanning 566–601 (DIDECDPDPCHYGSCKDGVATFTCLCRPGYTGHHCE) is the EGF-like 15; calcium-binding domain. One can recognise an EGF-like 16; calcium-binding domain in the interval 603 to 639 (NINECSSQPCRHGGTCQDRDNAYLCFCLKGTTGPNCE). S609 carries O-linked (Glc...) serine glycosylation. T617 is a glycosylation site (O-linked (Fuc...) threonine). The EGF-like 17; calcium-binding domain maps to 641–676 (NLDDCASSPCDSGTCLDKIDGYECACEPGYTGSMCN). S647 carries O-linked (Glc...) serine glycosylation. In terms of domain architecture, EGF-like 18; calcium-binding spans 678-714 (NIDECAGNPCHNGGTCEDGINGFTCRCPEGYHDPTCL). T692 carries an O-linked (Fuc...) threonine glycan. In terms of domain architecture, EGF-like 19; calcium-binding spans 716–751 (EVNECNSNPCVHGACRDSLNGYKCDCDPGWSGTNCD). S722 is a glycosylation site (O-linked (Glc...) serine). The EGF-like 20 domain maps to 753-789 (NNNECESNPCVNGGTCKDMTSGYVCTCREGFSGPNCQ). O-linked (Glc...) serine glycosylation occurs at S759. O-linked (Fuc...) threonine glycosylation is present at T767. S784 carries O-linked (GlcNAc) serine glycosylation. The EGF-like 21; calcium-binding domain maps to 791-827 (NINECASNPCLNQGTCIDDVAGYKCNCLLPYTGATCE). O-linked (Glc...) serine glycosylation occurs at S797. T805 is a glycosylation site (O-linked (Fuc...) threonine). One can recognise an EGF-like 22 domain in the interval 829-867 (VLAPCAPSPCRNGGECRQSEDYESFSCVCPTGWQGQTCE). The 37-residue stretch at 869–905 (DINECVLSPCRHGASCQNTHGGYRCHCQAGYSGRNCE) folds into the EGF-like 23; calcium-binding domain. The EGF-like 24 domain maps to 907–943 (DIDDCRPNPCHNGGSCTDGINTAFCDCLPGFRGTFCE). The O-linked (Fuc) serine glycan is linked to S921. The region spanning 945 to 981 (DINECASDPCRNGANCTDCVDSYTCTCPAGFSGIHCE) is the EGF-like 25; calcium-binding domain. O-linked (Glc...) serine glycosylation is present at S951. An N-linked (GlcNAc...) asparagine glycan is attached at N959. EGF-like domains are found at residues 983–1019 (NTPDCTESSCFNGGTCVDGINSFTCLCPPGFTGSYCQ), 1021–1057 (DVNECDSQPCLHGGTCQDGCGSYRCTCPQGYTGPNCQ), 1059–1095 (LVHWCDSSPCKNGGKCWQTHTQYRCECPSGWTGLYCD), 1097–1143 (PSVS…SYCE), and 1145–1181 (LVDECSPSPCQNGATCTDYLGGYSCKCVAGYHGVNCS). T997 carries an O-linked (Fuc...) threonine glycan. An O-linked (Glc...) serine glycan is attached at S1027. The O-linked (Fuc...) threonine glycan is linked to T1035. The O-linked (Glc...) serine glycan is linked to S1065. Residue T1159 is glycosylated (O-linked (Fuc...) threonine). N1179 is a glycosylation site (N-linked (GlcNAc...) asparagine). Positions 1183–1219 (EIDECLSHPCQNGGTCLDLPNTYKCSCPRGTQGVHCE) constitute an EGF-like 31; calcium-binding domain. Residue S1189 is glycosylated (O-linked (Glc...) serine). The O-linked (Fuc...) threonine glycan is linked to T1197. Residues 1221–1265 (NVDDCNPPVDPVSRSPKCFNNGTCVDQVGGYSCTCPPGFVGERCE) form the EGF-like 32; calcium-binding domain. An N-linked (GlcNAc...) asparagine glycan is attached at N1241. EGF-like domains follow at residues 1267 to 1305 (DVNECLSNPCDARGTQNCVQRVNDFHCECRAGHTGRRCE), 1307 to 1346 (VINGCKGKPCKNGGTCAVASNTARGFICKCPAGFEGATCE), 1348 to 1384 (DARTCGSLRCLNGGTCISGPRSPTCLCLGPFTGPECQ), and 1387 to 1426 (ASSPCLGGNPCYNQGTCEPTSESPFYRCLCPAKFNGLLCH). An O-linked (Glc...) serine glycan is attached at S1273. A glycan (O-linked (Fuc...) threonine) is linked at T1362. O-linked (GlcNAc...) threonine glycosylation occurs at T1379. An O-linked (Fuc...) threonine; alternate glycan is attached at T1402. T1402 carries an O-linked (GalNAc...) threonine; alternate glycan. 3 LNR repeats span residues 1449-1489 (CELP…PWKN), 1490-1531 (CTQS…CNPL), and 1532-1571 (YDQYCKDHFSDGHCDQGCNSAECEWDGLDCAEHVPERLAA). Residues D1457, N1460, D1475, and D1478 each coordinate Ca(2+). N-linked (GlcNAc...) asparagine glycosylation is present at N1489. Cystine bridges form between C1490–C1514, C1496–C1509, C1505–C1521, C1536–C1549, and C1545–C1561. A glycan (N-linked (GlcNAc...) asparagine) is linked at N1587. A glycan (O-linked (GalNAc...) threonine) is linked at T1725. The interval 1728–1760 (PPPPAQLHFMYVAAAAFVLLFFVGCGVLLSRKR) is interaction with PSEN1. Residues 1736-1756 (FMYVAAAAFVLLFFVGCGVLL) traverse the membrane as a helical segment. The Cytoplasmic portion of the chain corresponds to 1757–2555 (SRKRRRQHGQ…QIARIPEAFK (799 aa)). K1759 participates in a covalent cross-link: Glycyl lysine isopeptide (Lys-Gly) (interchain with G-Cter in ubiquitin). The interval 1780 to 1808 (KKKRREPLGEDSVGLKPLKNASDGALMDD) is disordered. Residue T1861 is modified to Phosphothreonine. ANK repeat units follow at residues 1927-1956 (TGETALHLAARYSRSDAAKRLLEASADANI), 1960-1990 (MGRTPLHAAVSADAQGVFQILIRNRATDLDA), 1994-2023 (DGTTPLILAARLAVEGMLEDLINSHADVNA), 2027-2056 (LGKSALHWAAAVNNVDAAVVLLKNGANKDM), 2060-2089 (REETPLFLAAREGSYETAKVLLDHFANRDI), and 2095-2122 (RLPRDIAQERMHHDIVRLLDEYNLVRSP). The segment at 1947–1955 (LLEASADAN) is HIF1AN-binding. (3S)-3-hydroxyasparagine; by HIF1AN; partial is present on N1955. Residues 2014 to 2022 (LINSHADVN) are HIF1AN-binding. (3S)-3-hydroxyasparagine; by HIF1AN is present on N2022. Disordered stretches follow at residues 2151 to 2194 (PGVQ…LDSS), 2379 to 2447 (LVQT…QPLG), and 2483 to 2555 (TPPS…EAFK). Positions 2379 to 2408 (LVQTQQVQPQNLQMQQQNLQPANIQQQQSL) are enriched in low complexity. The span at 2483 to 2502 (TPPSQHSYSSPVDNTPSHQL) shows a compositional bias: polar residues. Residues 2512 to 2527 (PSPESPDQWSSSSPHS) are compositionally biased toward low complexity. Residues 2528–2547 (NVSDWSEGVSSPPTSMQSQI) show a composition bias toward polar residues.

This sequence belongs to the NOTCH family. In terms of assembly, heterodimer of a C-terminal fragment N(TM) and an N-terminal fragment N(EC) which are probably linked by disulfide bonds. Interacts with DNER, DTX1, DTX2 and RBPJ/RBPSUH. Also interacts with MAML1, MAML2 and MAML3 which act as transcriptional coactivators for NOTCH1. The NOTCH1 intracellular domain interacts with SNW1; the interaction involves multimerized NOTCH1 NICD and is implicated in a formation of an intermediate preactivation complex which associates with DNA-bound CBF-1/RBPJ. The activated membrane-bound form interacts with AAK1 which promotes NOTCH1 stabilization. Forms a trimeric complex with FBXW7 and SGK1. Interacts with HIF1AN. HIF1AN negatively regulates the function of notch intracellular domain (NICD), accelerating myogenic differentiation. Interacts (via NICD) with SNAI1 (via zinc fingers); the interaction induces SNAI1 degradation via MDM2-mediated ubiquitination and inhibits SNAI1-induced cell invasion. Interacts (via NICD) with MDM2A. Interacts (via NICD) with BCL6; the interaction decreases MAML1 recruitment by NOTCH1 NICD on target genes DNA and inhibits NOTCH1 transactivation activity. Interacts with THBS4. Interacts (via the EGF-like repeat region) with CCN3 (via CTCK domain). Interacts (via EGF-like domains) with DLL4 (via N-terminal DSL and MNNL domains). Interacts with ZMIZ1. Interacts (via NICD domain) with MEGF10 (via the cytoplasmic domain). Interacts with DLL1 and JAG1. Interacts (via NICD domain) with PRAG1. Forms a complex with PRAG1, N1ICD and MAML1, in a MAML1-dependent manner. Interacts (via transmembrane region) with PSEN1; the interaction is direct. Interacts with ZFP64. Post-translationally, synthesized in the endoplasmic reticulum as an inactive form which is proteolytically cleaved by a furin-like convertase in the trans-Golgi network before it reaches the plasma membrane to yield an active, ligand-accessible form. Cleavage results in a C-terminal fragment N(TM) and a N-terminal fragment N(EC). Following ligand binding, it is cleaved by ADAM17 to yield a membrane-associated intermediate fragment called notch extracellular truncation (NEXT). Following endocytosis, this fragment is then cleaved by one of the catalytic subunits of gamma-secretase (PSEN1 or PSEN2), to release a Notch-derived peptide containing the intracellular domain (NICD) from the membrane. In terms of processing, phosphorylated. O-glycosylated on the EGF-like domains. O-glucosylated at Ser-435 by KDELC1 and KDELC2. Contains both O-linked fucose and O-linked glucose in the EGF-like domains 11, 12 and 13, which are interacting with the residues on DLL4. O-linked glycosylation by GALNT11 is involved in determination of left/right symmetry: glycosylation promotes activation of NOTCH1, possibly by promoting cleavage by ADAM17, modulating the balance between motile and immotile (sensory) cilia at the left-right organiser (LRO). MFNG-, RFNG- and LFNG-mediated modification of O-fucose residues at specific EGF-like domains results in inhibition of its activation by JAG1 and enhancement of its activation by DLL1 via an increased binding to DLL1. Post-translationally, ubiquitinated. Undergoes 'Lys-29'-linked polyubiquitination by ITCH; promotes the lysosomal degradation of non-activated internalized NOTCH1. Deubiquitination by USP12 is required for transport of internalized non-activated receptor from late endosomes to lysosomes for degradation. Monoubiquitination at Lys-1759 is required for activation by gamma-secretase cleavage, it promotes interaction with AAK1, which stabilizes it. Deubiquitination by EIF3F is necessary for nuclear import of activated Notch. In terms of processing, hydroxylated at Asn-1955 by HIF1AN. Hydroxylated at Asn-2022 by HIF1AN. Hydroxylation reduces affinity for HI1AN and may thus indirectly modulate negative regulation of NICD. In fetal tissues most abundant in spleen, brain stem and lung. Also present in most adult tissues where it is found mainly in lymphoid tissues.

It localises to the cell membrane. The protein localises to the late endosome membrane. Its subcellular location is the nucleus. Functionally, functions as a receptor for membrane-bound ligands Jagged-1 (JAG1), Jagged-2 (JAG2) and Delta-1 (DLL1) to regulate cell-fate determination. Upon ligand activation through the released notch intracellular domain (NICD) it forms a transcriptional activator complex with RBPJ/RBPSUH and activates genes of the enhancer of split locus. Affects the implementation of differentiation, proliferation and apoptotic programs. Involved in angiogenesis; negatively regulates endothelial cell proliferation and migration and angiogenic sprouting. Involved in the maturation of both CD4(+) and CD8(+) cells in the thymus. Important for follicular differentiation and possibly cell fate selection within the follicle. During cerebellar development, functions as a receptor for neuronal DNER and is involved in the differentiation of Bergmann glia. Represses neuronal and myogenic differentiation. May play an essential role in postimplantation development, probably in some aspect of cell specification and/or differentiation. May be involved in mesoderm development, somite formation and neurogenesis. May enhance HIF1A function by sequestering HIF1AN away from HIF1A. Required for the THBS4 function in regulating protective astrogenesis from the subventricular zone (SVZ) niche after injury. Involved in determination of left/right symmetry by modulating the balance between motile and immotile (sensory) cilia at the left-right organiser (LRO). In Homo sapiens (Human), this protein is Neurogenic locus notch homolog protein 1 (NOTCH1).